Here is a 118-residue protein sequence, read N- to C-terminus: Large ribosomal subunit protein uL22 (118 aa).

The protein belongs to the universal ribosomal protein uL22 family. As to quaternary structure, part of the 50S ribosomal subunit.

In terms of biological role, this protein binds specifically to 23S rRNA; its binding is stimulated by other ribosomal proteins, e.g. L4, L17, and L20. It is important during the early stages of 50S assembly. It makes multiple contacts with different domains of the 23S rRNA in the assembled 50S subunit and ribosome. Functionally, the globular domain of the protein is located near the polypeptide exit tunnel on the outside of the subunit, while an extended beta-hairpin is found that lines the wall of the exit tunnel in the center of the 70S ribosome. The polypeptide is Large ribosomal subunit protein uL22 (Chlorobium limicola (strain DSM 245 / NBRC 103803 / 6330)).